A 646-amino-acid chain; its full sequence is Long-chain fatty acid transport protein 1 (646 aa).

At 1–13 (MRAPGAGSASVAS) the chain is on the extracellular side. Residues 14 to 34 (LVLLWLLGLPWTWSTAAALGV) form a helical membrane-spanning segment. At 35–646 (YVGGGGWRFL…TRICSGAFAL (612 aa)) the chain is on the cytoplasmic side. The sufficient for oligomerization stretch occupies residues 191 to 475 (EMSGELGKSL…YISESATSKK (285 aa)). 246 to 257 (YIYTSGTTGLPK) contacts AMP.

The protein belongs to the ATP-dependent AMP-binding enzyme family. In terms of assembly, self-associates. May function as a homodimer. Interacts with EPRS1; mediates the translocation of SLC27A1 from the cytoplasm to the plasma membrane thereby increasing the uptake of long-chain fatty acids. Interacts with DGAT2 and this interaction is enhanced in the presence of ZFYVE1.

The protein localises to the cell membrane. Its subcellular location is the endomembrane system. It is found in the cytoplasm. It catalyses the reaction a fatty acid(in) = a fatty acid(out). The catalysed reaction is (9Z)-octadecenoate(out) = (9Z)-octadecenoate(in). It carries out the reaction hexadecanoate(out) = hexadecanoate(in). The enzyme catalyses (5Z,8Z,11Z,14Z)-eicosatetraenoate(out) = (5Z,8Z,11Z,14Z)-eicosatetraenoate(in). It catalyses the reaction (9Z,12Z)-octadecadienoate(out) = (9Z,12Z)-octadecadienoate(in). The catalysed reaction is a long-chain fatty acid + ATP + CoA = a long-chain fatty acyl-CoA + AMP + diphosphate. It carries out the reaction (5Z,8Z,11Z,14Z)-eicosatetraenoate + ATP + CoA = (5Z,8Z,11Z,14Z)-eicosatetraenoyl-CoA + AMP + diphosphate. The enzyme catalyses a very long-chain fatty acid + ATP + CoA = a very long-chain fatty acyl-CoA + AMP + diphosphate. It catalyses the reaction tetracosanoate + ATP + CoA = tetracosanoyl-CoA + AMP + diphosphate. Inhibited by Triacsin C. Its function is as follows. Mediates the import of long-chain fatty acids (LCFA) into the cell by facilitating their transport at the plasma membrane. Also functions as an acyl-CoA ligase catalyzing the ATP-dependent formation of fatty acyl-CoA using LCFA and very-long-chain fatty acids (VLCFA) as substrates, which prevents fatty acid efflux from cells and might drive more fatty acid uptake. May act directly as a bona fide transporter, or alternatively, in a cytoplasmic or membrane-associated multimeric protein complex to trap and draw fatty acids towards accumulation. Plays a pivotal role in regulating available LCFA substrates from exogenous sources in tissues undergoing high levels of beta-oxidation or triglyceride synthesis. May be involved in regulation of cholesterol metabolism. Probably involved in fatty acid transport across the blood barrier. This Bos taurus (Bovine) protein is Long-chain fatty acid transport protein 1.